Reading from the N-terminus, the 458-residue chain is MTLPSIAIIGRPNVGKSTLVNRLCQSNDAIVFDKPGVTRDRTYQNASWGGKEFQVVDTGGLVFEDDSEFLPEIRTQVFLALEEASIALFVVDGNQGVTTGDLSIAKWLRNSDCKTIVAVNKCESLSLGISMASEFWKLGLGEPYPVSAIHGSGTGDLLDLVIDELPKDFDVEDKEDKVMMSIIGRPNVGKSSLLNAICGEKRAIVSDISGTTTDSIDTLIKKNSHLWKIVDTAGIRRKKNVKYGTEFFGINRAFKSIDRSDVCVLVIDAIDGVTDQDQKLAGRIEEQGRACVIVVNKWDLVEKNNSTIYQVEKELRSKLYFLHWSKMIFISALTGQRVENIFEHALNAVTQHRMRVTTSVVNEVLKEALGWKSPPTKRSGKQGRLYYGTQVKNQPPTFTLFVNDPKLFGITYRRYIEKQIRLNLGFEGSPIILLWRGKQKRDLEKETSKKNINIIQKD.

EngA-type G domains are found at residues 4-169 (PSIA…PKDF) and 178-353 (VMMS…TQHR). GTP contacts are provided by residues 10–17 (GRPNVGKS), 57–61 (DTGGL), 120–123 (NKCE), 184–191 (GRPNVGKS), 231–235 (DTAGI), and 296–299 (NKWD). One can recognise a KH-like domain in the interval 354-439 (MRVTTSVVNE…PIILLWRGKQ (86 aa)).

It belongs to the TRAFAC class TrmE-Era-EngA-EngB-Septin-like GTPase superfamily. EngA (Der) GTPase family. As to quaternary structure, associates with the 50S ribosomal subunit.

In terms of biological role, GTPase that plays an essential role in the late steps of ribosome biogenesis. This Prochlorococcus marinus (strain MIT 9515) protein is GTPase Der.